Consider the following 335-residue polypeptide: Nicotinate-nucleotide--dimethylbenzimidazole phosphoribosyltransferase (335 aa).

The active-site Proton acceptor is E304.

This sequence belongs to the CobT family.

The catalysed reaction is 5,6-dimethylbenzimidazole + nicotinate beta-D-ribonucleotide = alpha-ribazole 5'-phosphate + nicotinate + H(+). It functions in the pathway nucleoside biosynthesis; alpha-ribazole biosynthesis; alpha-ribazole from 5,6-dimethylbenzimidazole: step 1/2. Its function is as follows. Catalyzes the synthesis of alpha-ribazole-5'-phosphate from nicotinate mononucleotide (NAMN) and 5,6-dimethylbenzimidazole (DMB). This is Nicotinate-nucleotide--dimethylbenzimidazole phosphoribosyltransferase from Thermus thermophilus (strain ATCC 27634 / DSM 579 / HB8).